The following is a 146-amino-acid chain: Probable flagellum biosynthesis repressor protein FlbT 1 (146 aa).

This sequence belongs to the FlbT family.

In terms of biological role, has a post-transcriptional repressor function in flagellum biogenesis. Associates with the 5'-UTR of fljK mRNA and promotes its degradation. The sequence is that of Probable flagellum biosynthesis repressor protein FlbT 1 from Bradyrhizobium diazoefficiens (strain JCM 10833 / BCRC 13528 / IAM 13628 / NBRC 14792 / USDA 110).